A 224-amino-acid chain; its full sequence is Type II restriction enzyme BstVI (224 aa).

It belongs to the XhoI type II restriction endonuclease family.

The enzyme catalyses Endonucleolytic cleavage of DNA to give specific double-stranded fragments with terminal 5'-phosphates.. Functionally, a P subtype restriction enzyme that recognizes the double-stranded sequence 5'-CTCGAG-3' and cleaves after C-1. This Geobacillus stearothermophilus (Bacillus stearothermophilus) protein is Type II restriction enzyme BstVI.